The sequence spans 215 residues: Probable GTP-binding protein EngB (215 aa).

Residues 31–215 (GPPEIAFAGR…RTAILQAVVQ (185 aa)) form the EngB-type G domain. GTP is bound by residues 39–46 (GRSNVGKS), 66–70 (GRTQE), 93–96 (DMPG), 160–163 (TKSD), and 194–196 (TSA). Mg(2+) is bound by residues Ser-46 and Thr-68.

Belongs to the TRAFAC class TrmE-Era-EngA-EngB-Septin-like GTPase superfamily. EngB GTPase family. Requires Mg(2+) as cofactor.

Necessary for normal cell division and for the maintenance of normal septation. The sequence is that of Probable GTP-binding protein EngB from Bartonella bacilliformis (strain ATCC 35685 / KC583 / Herrer 020/F12,63).